The sequence spans 342 residues: N-acetyl-gamma-glutamyl-phosphate reductase (342 aa).

Residue Cys-149 is part of the active site.

Belongs to the NAGSA dehydrogenase family. Type 1 subfamily.

It localises to the cytoplasm. It catalyses the reaction N-acetyl-L-glutamate 5-semialdehyde + phosphate + NADP(+) = N-acetyl-L-glutamyl 5-phosphate + NADPH + H(+). It functions in the pathway amino-acid biosynthesis; L-arginine biosynthesis; N(2)-acetyl-L-ornithine from L-glutamate: step 3/4. Catalyzes the NADPH-dependent reduction of N-acetyl-5-glutamyl phosphate to yield N-acetyl-L-glutamate 5-semialdehyde. This Nitrosomonas europaea (strain ATCC 19718 / CIP 103999 / KCTC 2705 / NBRC 14298) protein is N-acetyl-gamma-glutamyl-phosphate reductase.